We begin with the raw amino-acid sequence, 1299 residues long: Outer capsid protein VP1 (1299 aa).

The protein belongs to the aquareoviridae outer capsid VP1 protein family.

Its subcellular location is the virion. The enzyme catalyses a 5'-end diphospho-ribonucleoside in mRNA + GTP + H(+) = a 5'-end (5'-triphosphoguanosine)-ribonucleoside in mRNA + diphosphate. It carries out the reaction a 5'-end (5'-triphosphoguanosine)-ribonucleoside in mRNA + S-adenosyl-L-methionine = a 5'-end (N(7)-methyl 5'-triphosphoguanosine)-ribonucleoside in mRNA + S-adenosyl-L-homocysteine. Outer capsid protein involved in mRNA capping. Catalyzes the last 3 enzymatic activities for formation of the 5' cap structure on the viral plus-strand transcripts, namely the RNA guanylyltransferase, RNA-7N- and RNA-2'O-methyltransferase activities. The protein is Outer capsid protein VP1 (S1) of Aquareovirus C (isolate Golden shiner/USA/GSRV/1977) (AQRV-C).